A 428-amino-acid chain; its full sequence is Putative UPF0496 protein 5 (428 aa).

The segment covering 1–14 has biased composition (basic residues); sequence MGNRHGIMRPRRLA. The tract at residues 1–40 is disordered; that stretch reads MGNRHGIMRPRRLASGRSAAAAEEEGEDGEGEPGSYEAAC. Residues 22–31 show a composition bias toward acidic residues; that stretch reads AEEEGEDGEG. A run of 2 helical transmembrane segments spans residues 229–249 and 252–272; these read IVFL…AAIA and PVAA…GKWM.

The protein belongs to the UPF0496 family.

It localises to the membrane. The chain is Putative UPF0496 protein 5 from Oryza sativa subsp. indica (Rice).